Reading from the N-terminus, the 393-residue chain is Protein TsgA (393 aa).

Helical transmembrane passes span 11-31, 51-71, 78-98, 101-121, 134-154, 162-182, 206-226, 245-265, 273-293, 298-318, 332-352, and 361-381; these read WISFLSYALTGALVIVTGMVM, FLNAGILISIFLNAWLMEIVP, FGFILMILAVAGLMLSHSLAL, AAMFVLGLVSGITMSIGTFLI, LLFTDSFFSMAGMVFPMVAAF, WYWVYACIGLVYLAIFILTFG, IGVLFLAVAALCYILGQLGFI, ALVSDFWMSYMFGMWAFSFIL, ILTVLAGMATVLMYLFITGTQ, WFILTLGFFSSAIYTSIITLG, FILTCGTIGTMLTFVVTGPIV, and LLTANGLYAVVFVMCFALGFV.

Belongs to the major facilitator superfamily. TsgA family.

Its subcellular location is the cell inner membrane. This is Protein TsgA from Salmonella arizonae (strain ATCC BAA-731 / CDC346-86 / RSK2980).